Here is a 405-residue protein sequence, read N- to C-terminus: uncharacterized protein (405 aa).

10 helical membrane-spanning segments follow: residues valine 9–valine 29, valine 41–cysteine 61, valine 74–threonine 94, glutamine 98–phenylalanine 118, alanine 138–glycine 158, leucine 168–asparagine 190, alanine 227–histidine 247, tryptophan 252–isoleucine 272, leucine 291–leucine 311, and isoleucine 373–proline 393.

The protein belongs to the major facilitator superfamily. Drug:H(+) antiporter-3 (DHA3) (TC 2.A.1.21) family.

The protein localises to the cell membrane. This is an uncharacterized protein from Bacillus subtilis (strain 168).